We begin with the raw amino-acid sequence, 394 residues long: MADKKNEDFVVRMPDNGTVEKEPFLARSPPARARTGSGGGFGDSFSLARVANNPPAAILAYCLSSISMTVVNKYVVSGSEWNLNFFYLAVQAIVCIIAILFCKQIGIITNLAPFDNVKAKKWFPVSLLLVGMIYTSTKALQFLSVPVYTIFKNLTIIAIAYGEVLWFGGSVSPLALVSFGLMVLSSVVAAWADIQSAIHGGSHPSEASTAISTLNAGYAWMGMNVFCSAAYLLGMRKVIHKMNFKDWDSMFYNNLLTIPVLIVCSLIAEDWSAANLARNFPIESRNALFIGMIYSGLGAIFISYCSAWCIRVTTSTTYSMVGALNKLPIAISGLVFFSAPVTFGSVSAIVIGFISGIVYAWAKARQSSQAKSALPTQQPVMSASSQSNKDASNS.

Over 1–55 (MADKKNEDFVVRMPDNGTVEKEPFLARSPPARARTGSGGGFGDSFSLARVANNPP) the chain is Cytoplasmic. The helical transmembrane segment at 56-76 (AAILAYCLSSISMTVVNKYVV) threads the bilayer. Residues 77–80 (SGSE) lie on the Lumenal side of the membrane. A helical membrane pass occupies residues 81-101 (WNLNFFYLAVQAIVCIIAILF). At 102 to 121 (CKQIGIITNLAPFDNVKAKK) the chain is on the cytoplasmic side. Residues 122–144 (WFPVSLLLVGMIYTSTKALQFLS) traverse the membrane as a helical segment. Residues 145–149 (VPVYT) are Lumenal-facing. The chain crosses the membrane as a helical span at residues 150-167 (IFKNLTIIAIAYGEVLWF). At 168–173 (GGSVSP) the chain is on the cytoplasmic side. The helical transmembrane segment at 174-198 (LALVSFGLMVLSSVVAAWADIQSAI) threads the bilayer. At 199 to 213 (HGGSHPSEASTAIST) the chain is on the lumenal side. Residues 214-234 (LNAGYAWMGMNVFCSAAYLLG) form a helical membrane-spanning segment. Topologically, residues 235–246 (MRKVIHKMNFKD) are cytoplasmic. A helical transmembrane segment spans residues 247–267 (WDSMFYNNLLTIPVLIVCSLI). Residues 268 to 287 (AEDWSAANLARNFPIESRNA) lie on the Lumenal side of the membrane. A helical membrane pass occupies residues 288–308 (LFIGMIYSGLGAIFISYCSAW). Over 309–316 (CIRVTTST) the chain is Cytoplasmic. A helical transmembrane segment spans residues 317–339 (TYSMVGALNKLPIAISGLVFFSA). The Lumenal portion of the chain corresponds to 340–342 (PVT). A helical transmembrane segment spans residues 343–362 (FGSVSAIVIGFISGIVYAWA). Topologically, residues 363-394 (KARQSSQAKSALPTQQPVMSASSQSNKDASNS) are cytoplasmic. A disordered region spans residues 371–394 (KSALPTQQPVMSASSQSNKDASNS). Positions 374 to 394 (LPTQQPVMSASSQSNKDASNS) are enriched in polar residues.

Belongs to the TPT transporter family. SLC35D subfamily. Homooligomer.

The protein localises to the golgi apparatus membrane. Its subcellular location is the cytoplasmic vesicle membrane. The protein resides in the endoplasmic reticulum membrane. In terms of biological role, involved in the import of GDP-mannose from the cytoplasm into the Golgi lumen. In Pyricularia oryzae (strain 70-15 / ATCC MYA-4617 / FGSC 8958) (Rice blast fungus), this protein is GDP-mannose transporter (VRG4).